The chain runs to 317 residues: Electron transfer flavoprotein subunit alpha (317 aa).

The protein belongs to the ETF alpha-subunit/FixB family. Heterodimer of an alpha and a beta subunit. It depends on FAD as a cofactor.

The protein resides in the cytoplasm. It functions in the pathway lipid metabolism; butanoate metabolism. Its function is as follows. Part of an electron transfer flavoprotein involved in syntrophic growth of S.wolfei with butyrate. Probably receives electrons from butyryl-CoA dehydrogenases, and transfers them to the membrane-bound quinone oxidoreductase Swol_0698. The sequence is that of Electron transfer flavoprotein subunit alpha from Syntrophomonas wolfei subsp. wolfei (strain DSM 2245B / Goettingen).